The following is a 79-amino-acid chain: Small ribosomal subunit protein bS18 (79 aa).

This sequence belongs to the bacterial ribosomal protein bS18 family. As to quaternary structure, part of the 30S ribosomal subunit. Forms a tight heterodimer with protein bS6.

Binds as a heterodimer with protein bS6 to the central domain of the 16S rRNA, where it helps stabilize the platform of the 30S subunit. This chain is Small ribosomal subunit protein bS18, found in Bradyrhizobium diazoefficiens (strain JCM 10833 / BCRC 13528 / IAM 13628 / NBRC 14792 / USDA 110).